Reading from the N-terminus, the 188-residue chain is Anaphase-promoting complex subunit 10 (188 aa).

Residues 4-187 (NSNINSNSRL…SPEVSMFQTL (184 aa)) enclose the DOC domain.

The protein belongs to the APC10 family. The APC/C is composed of at least 13 subunits that stay tightly associated throughout the cell cycle: anapc1, anapc2, anapc3, anapc4, anapc5, anapc6, anapc7, anapc8, anapc10, anapc11, cdc20, cdc26 and cdh1.

The protein localises to the nucleus. Its pathway is protein modification; protein ubiquitination. Component of the anaphase promoting complex/cyclosome (APC/C), a cell cycle-regulated E3 ubiquitin-protein ligase complex that controls progression through mitosis and the G1 phase of the cell cycle. This chain is Anaphase-promoting complex subunit 10 (anapc10), found in Dictyostelium discoideum (Social amoeba).